Reading from the N-terminus, the 470-residue chain is Neuraminidase (470 aa).

Residues 1–6 are Intravirion-facing; the sequence is MNPNQK. The chain crosses the membrane as a helical span at residues 7 to 27; it reads IITIGSISIAIGIISLMLQIG. The involved in apical transport and lipid raft association stretch occupies residues 11–33; sequence GSISIAIGIISLMLQIGNIISIW. The Virion surface portion of the chain corresponds to 28-470; that stretch reads NIISIWASHS…GAELPFTIDK (443 aa). Residues 36–90 form a hypervariable stalk region region; the sequence is HSIQTGSQNHTGICNQRIITYENSTWVNHTYVNINNTNVVAGKDKTSVTLAGNSS. 5 N-linked (GlcNAc...) asparagine; by host glycosylation sites follow: Asn-44, Asn-58, Asn-63, Asn-70, and Asn-88. Positions 91–470 are head of neuraminidase; that stretch reads LCSISGWAIY…GAELPFTIDK (380 aa). Cystine bridges form between Cys-92–Cys-417, Cys-124–Cys-129, Cys-184–Cys-231, Cys-233–Cys-238, Cys-279–Cys-292, Cys-281–Cys-290, Cys-318–Cys-335, and Cys-421–Cys-447. Arg-118 provides a ligand contact to substrate. Residue Asn-146 is glycosylated (N-linked (GlcNAc...) asparagine; by host). Catalysis depends on Asp-151, which acts as the Proton donor/acceptor. Residue Arg-152 coordinates substrate. Asn-235 is a glycosylation site (N-linked (GlcNAc...) asparagine; by host). 277 to 278 is a substrate binding site; sequence EE. Arg-293 lines the substrate pocket. Asp-294, Gly-298, and Asp-324 together coordinate Ca(2+). Arg-368 provides a ligand contact to substrate. Catalysis depends on Tyr-402, which acts as the Nucleophile. Residues Asn-434 and Asn-455 are each glycosylated (N-linked (GlcNAc...) asparagine; by host).

The protein belongs to the glycosyl hydrolase 34 family. Homotetramer. Ca(2+) is required as a cofactor. In terms of processing, N-glycosylated.

Its subcellular location is the virion membrane. The protein localises to the host apical cell membrane. It carries out the reaction Hydrolysis of alpha-(2-&gt;3)-, alpha-(2-&gt;6)-, alpha-(2-&gt;8)- glycosidic linkages of terminal sialic acid residues in oligosaccharides, glycoproteins, glycolipids, colominic acid and synthetic substrates.. With respect to regulation, inhibited by the neuraminidase inhibitors zanamivir (Relenza) and oseltamivir (Tamiflu). These drugs interfere with the release of progeny virus from infected cells and are effective against all influenza strains. Resistance to neuraminidase inhibitors is quite rare. Catalyzes the removal of terminal sialic acid residues from viral and cellular glycoconjugates. Cleaves off the terminal sialic acids on the glycosylated HA during virus budding to facilitate virus release. Additionally helps virus spread through the circulation by further removing sialic acids from the cell surface. These cleavages prevent self-aggregation and ensure the efficient spread of the progeny virus from cell to cell. Otherwise, infection would be limited to one round of replication. Described as a receptor-destroying enzyme because it cleaves a terminal sialic acid from the cellular receptors. May facilitate viral invasion of the upper airways by cleaving the sialic acid moieties on the mucin of the airway epithelial cells. Likely to plays a role in the budding process through its association with lipid rafts during intracellular transport. May additionally display a raft-association independent effect on budding. Plays a role in the determination of host range restriction on replication and virulence. Sialidase activity in late endosome/lysosome traffic seems to enhance virus replication. This Aves (Human) protein is Neuraminidase.